The sequence spans 68 residues: Lantibiotic mersacidin (68 aa).

Positions 1–28 are disordered; sequence MSQEAIIRSWKDPFSRENSTQNPAGNPF. Positions 1 to 48 are excised as a propeptide; sequence MSQEAIIRSWKDPFSRENSTQNPAGNPFSELKEAQMDKLVGAGDMEAA. A cross-link (beta-methyllanthionine (Cys-Thr)) is located at residues 49-50; it reads CT. Cross-links (beta-methyllanthionine (Thr-Cys)) lie at residues 52–60 and 61–66; these read TLPGGGGVC and TLTSEC. Positions 63 to 68 form a cross-link, S-(2-aminovinyl)-3-methyl-D-cysteine (Thr-Cys); it reads TSECIC. 2,3-didehydroalanine (Ser) is present on Ser64.

The protein belongs to the type B lantibiotic family. Post-translationally, maturation of lantibiotics involves the enzymatic conversion of Thr, and Ser into dehydrated AA and the formation of thioether bonds with cysteine. The carboxy-terminal beta-methyllanthionine undergoes decarboxylation. This is followed by membrane translocation and cleavage of the modified precursor.

Its function is as follows. Kills a number of Gram-positive bacteria. Acts at the level of cell wall biosynthesis by interfering with bacterial peptidoglycan biosynthesis. Specifically inhibits the conversion of the lipid II intermediate into polymeric nascent glycan strands by transglycosylation. May interact with the peptidoglycan precursor rather than with the enzyme. The protein is Lantibiotic mersacidin (mrsA) of Bacillus sp. (strain HIL-Y85/54728).